Consider the following 577-residue polypeptide: Arginine--tRNA ligase (577 aa).

Positions 122–132 match the 'HIGH' region motif; the sequence is PNVAKEMHVGH.

The protein belongs to the class-I aminoacyl-tRNA synthetase family. In terms of assembly, monomer.

It localises to the cytoplasm. The catalysed reaction is tRNA(Arg) + L-arginine + ATP = L-arginyl-tRNA(Arg) + AMP + diphosphate. This is Arginine--tRNA ligase from Histophilus somni (strain 129Pt) (Haemophilus somnus).